Reading from the N-terminus, the 355-residue chain is Heat-inducible transcription repressor HrcA (355 aa).

Belongs to the HrcA family.

In terms of biological role, negative regulator of class I heat shock genes (grpE-dnaK-dnaJ and groELS operons). Prevents heat-shock induction of these operons. This chain is Heat-inducible transcription repressor HrcA, found in Prosthecochloris aestuarii (strain DSM 271 / SK 413).